Consider the following 375-residue polypeptide: Phytanoyl-CoA hydroxylase-interacting protein-like (375 aa).

3 positions are modified to phosphoserine: serine 11, serine 12, and serine 15. Asparagine 22 carries an N-linked (GlcNAc...) asparagine glycan. The residue at position 24 (serine 24) is a Phosphoserine. A glycan (N-linked (GlcNAc...) asparagine) is linked at asparagine 36. In terms of domain architecture, Fibronectin type-III spans 51–160; it reads VPHNIKINNI…EIIEFCTADY (110 aa).

The protein belongs to the PHYHIP family.

Its function is as follows. May play a role in the development of the central system. This chain is Phytanoyl-CoA hydroxylase-interacting protein-like (Phyhipl), found in Rattus norvegicus (Rat).